The primary structure comprises 241 residues: Methylthioribulose-1-phosphate dehydratase (241 aa).

The segment covering Met1–Thr17 has biased composition (polar residues). Residues Met1–His21 are disordered. Position 100 (Cys100) interacts with substrate. Zn(2+) contacts are provided by His117 and His119. Catalysis depends on Glu146, which acts as the Proton donor/acceptor. A Zn(2+)-binding site is contributed by His202.

This sequence belongs to the aldolase class II family. MtnB subfamily. Zn(2+) is required as a cofactor.

The protein resides in the cytoplasm. It catalyses the reaction 5-(methylsulfanyl)-D-ribulose 1-phosphate = 5-methylsulfanyl-2,3-dioxopentyl phosphate + H2O. The protein operates within amino-acid biosynthesis; L-methionine biosynthesis via salvage pathway; L-methionine from S-methyl-5-thio-alpha-D-ribose 1-phosphate: step 2/6. In terms of biological role, catalyzes the dehydration of methylthioribulose-1-phosphate (MTRu-1-P) into 2,3-diketo-5-methylthiopentyl-1-phosphate (DK-MTP-1-P). This is Methylthioribulose-1-phosphate dehydratase from Aspergillus flavus (strain ATCC 200026 / FGSC A1120 / IAM 13836 / NRRL 3357 / JCM 12722 / SRRC 167).